The sequence spans 412 residues: Argininosuccinate synthase (412 aa).

Residues 10 to 18 (AYSGGLDTS) and Ala-36 contribute to the ATP site. L-citrulline contacts are provided by Tyr-87 and Ser-92. Tyr-87 carries the post-translational modification Phosphotyrosine. Lys-112 is subject to N6-acetyllysine. Phosphotyrosine is present on Tyr-113. 115-123 (SHGATGKGN) contacts ATP. L-aspartate-binding residues include Thr-119, Asn-123, and Asp-124. Asn-123 is a binding site for L-citrulline. Arg-127 contacts L-citrulline. 2 positions are modified to N6-acetyllysine; by CLOCK: Lys-165 and Lys-176. Ser-177 and Ser-180 each carry phosphoserine. L-citrulline-binding residues include Ser-180 and Ser-189. Residue Ser-219 is modified to Phosphoserine. Glu-270 and Tyr-282 together coordinate L-citrulline.

Belongs to the argininosuccinate synthase family. Type 1 subfamily. Homotetramer. Interacts with NMRAL1. Interacts with CLOCK; in a circadian manner. Forms tissue-specific complexes with ASL, SLC7A1, HSP90AA1 and nitric oxide synthase NOS1, NOS2 or NOS3; the complex regulates cell-autonomous L-arginine synthesis and citrulline recycling while channeling extracellular L-arginine to nitric oxide synthesis pathway. Post-translationally, acetylated by CLOCK in a circadian manner which negatively regulates its enzyme activity. Deacetylated by histone deacetylases. In terms of tissue distribution, widely expressed.

It localises to the cytoplasm. Its subcellular location is the cytosol. It carries out the reaction L-citrulline + L-aspartate + ATP = 2-(N(omega)-L-arginino)succinate + AMP + diphosphate + H(+). The protein operates within amino-acid biosynthesis; L-arginine biosynthesis; L-arginine from L-ornithine and carbamoyl phosphate: step 2/3. It participates in nitrogen metabolism; urea cycle; (N(omega)-L-arginino)succinate from L-aspartate and L-citrulline: step 1/1. One of the enzymes of the urea cycle, the metabolic pathway transforming neurotoxic amonia produced by protein catabolism into inocuous urea in the liver of ureotelic animals. Catalyzes the formation of arginosuccinate from aspartate, citrulline and ATP and together with ASL it is responsible for the biosynthesis of arginine in most body tissues. The sequence is that of Argininosuccinate synthase from Mus musculus (Mouse).